The following is a 171-amino-acid chain: S-ribosylhomocysteine lyase (171 aa).

Residues histidine 54, histidine 58, and cysteine 128 each coordinate Fe cation.

This sequence belongs to the LuxS family. As to quaternary structure, homodimer. It depends on Fe cation as a cofactor.

It catalyses the reaction S-(5-deoxy-D-ribos-5-yl)-L-homocysteine = (S)-4,5-dihydroxypentane-2,3-dione + L-homocysteine. Involved in the synthesis of autoinducer 2 (AI-2) which is secreted by bacteria and is used to communicate both the cell density and the metabolic potential of the environment. The regulation of gene expression in response to changes in cell density is called quorum sensing. Catalyzes the transformation of S-ribosylhomocysteine (RHC) to homocysteine (HC) and 4,5-dihydroxy-2,3-pentadione (DPD). The polypeptide is S-ribosylhomocysteine lyase (Klebsiella pneumoniae (strain 342)).